The sequence spans 168 residues: Chorismate pyruvate-lyase (168 aa).

Methionine 36, arginine 78, leucine 116, and glutamate 157 together coordinate substrate.

The protein belongs to the UbiC family. As to quaternary structure, monomer.

It localises to the cytoplasm. The enzyme catalyses chorismate = 4-hydroxybenzoate + pyruvate. The protein operates within cofactor biosynthesis; ubiquinone biosynthesis. Removes the pyruvyl group from chorismate, with concomitant aromatization of the ring, to provide 4-hydroxybenzoate (4HB) for the ubiquinone pathway. The protein is Chorismate pyruvate-lyase of Photorhabdus laumondii subsp. laumondii (strain DSM 15139 / CIP 105565 / TT01) (Photorhabdus luminescens subsp. laumondii).